The following is a 341-amino-acid chain: uncharacterized protein (341 aa).

10 helical membrane-spanning segments follow: residues 10–30 (ALGVVLLLFVVFLWLISSFLT), 42–62 (PFLITYINTGTFVFYLIPWYF), 107–127 (LGFCIIWFAANYFSNSSLGFT), 129–149 (VASFTIISSMSGFFTLGLGTI), 155–175 (FTLSKLLALMASVGGVIIVVT), 192–212 (ALGNAYALLAALLYGCYSVMV), 226–246 (LFFGLVGLFDLILLWPFLIIL), 263–283 (LIVLIINASITFVSDYLWVIA), 290–310 (LLVTVGMSLSIPLALFFDILL), and 313–333 (HYLNFSLILGSLLVFAGFIVV).

It belongs to the TPT transporter family.

It localises to the vacuole membrane. It is found in the golgi apparatus membrane. This is an uncharacterized protein from Schizosaccharomyces pombe (strain 972 / ATCC 24843) (Fission yeast).